The chain runs to 297 residues: Phosphoribosylaminoimidazole-succinocarboxamide synthase (297 aa).

It belongs to the SAICAR synthetase family.

It carries out the reaction 5-amino-1-(5-phospho-D-ribosyl)imidazole-4-carboxylate + L-aspartate + ATP = (2S)-2-[5-amino-1-(5-phospho-beta-D-ribosyl)imidazole-4-carboxamido]succinate + ADP + phosphate + 2 H(+). Its pathway is purine metabolism; IMP biosynthesis via de novo pathway; 5-amino-1-(5-phospho-D-ribosyl)imidazole-4-carboxamide from 5-amino-1-(5-phospho-D-ribosyl)imidazole-4-carboxylate: step 1/2. In Corynebacterium glutamicum (strain R), this protein is Phosphoribosylaminoimidazole-succinocarboxamide synthase.